We begin with the raw amino-acid sequence, 678 residues long: DNA ligase (678 aa).

Residues 47 to 51 (DSDYD), 96 to 97 (SL), and glutamate 122 contribute to the NAD(+) site. Catalysis depends on lysine 124, which acts as the N6-AMP-lysine intermediate. Positions 145, 182, 300, and 324 each coordinate NAD(+). Residues cysteine 418, cysteine 421, cysteine 436, and cysteine 442 each contribute to the Zn(2+) site. A BRCT domain is found at 602 to 678 (AYNESFTGKT…ILEDNLKDLL (77 aa)).

The protein belongs to the NAD-dependent DNA ligase family. LigA subfamily. It depends on Mg(2+) as a cofactor. Requires Mn(2+) as cofactor.

It carries out the reaction NAD(+) + (deoxyribonucleotide)n-3'-hydroxyl + 5'-phospho-(deoxyribonucleotide)m = (deoxyribonucleotide)n+m + AMP + beta-nicotinamide D-nucleotide.. Its function is as follows. DNA ligase that catalyzes the formation of phosphodiester linkages between 5'-phosphoryl and 3'-hydroxyl groups in double-stranded DNA using NAD as a coenzyme and as the energy source for the reaction. It is essential for DNA replication and repair of damaged DNA. This is DNA ligase from Francisella tularensis subsp. novicida (strain U112).